Consider the following 226-residue polypeptide: MMDRGECLMSMKLRPMVTRPSSDGTLFWPFREERAFASAEEYGGGGGCMWPPRSYSCSFCGREFKSAQALGGHMNVHRRDRARLKQQSLSPSSTDQATPPECDRQQQVLDVGSKVLVQEETRKPNGTKREISDVCNNNVLESSMKRYEHDNGEVKTDLSVGLLSTEFDPRKKQLINGSSSSWKRAKTDVSRFPMMLGLVIGISEINGHHEELDLELRLGADPPKVN.

The C2H2-type zinc-finger motif lies at 55 to 77 (YSCSFCGREFKSAQALGGHMNVH). Residues 80-102 (DRARLKQQSLSPSSTDQATPPEC) are disordered. Polar residues predominate over residues 85 to 97 (KQQSLSPSSTDQA). The short motif at 212–216 (LDLEL) is the EAR-like (transcriptional repression) element.

As to expression, strongly expressed in inflorescences and flowers, and weakly in siliques, seedlings and roots. In flowers, it is expressed in petal primordia and their precursor cells. Also expressed in the lateral root caps and the basal cells of lateral roots.

The protein localises to the nucleus. Probable transcriptional regulator essential for petal development. Required for the early development of the organ primordia of the second whorl. Acts downstream of AP1 and PTL. This chain is Probable transcriptional regulator RABBIT EARS (RBE), found in Arabidopsis thaliana (Mouse-ear cress).